Here is a 359-residue protein sequence, read N- to C-terminus: AA9 family lytic polysaccharide monooxygenase B (359 aa).

The N-terminal stretch at 1–18 (MQLFTSFSLLAVASFASA) is a signal peptide. The Cu(2+) site is built by histidine 19 and histidine 102. Cystine bridges form between cysteine 72-cysteine 190 and cysteine 113-cysteine 117. N-linked (GlcNAc...) asparagine glycosylation occurs at asparagine 150. O2-binding residues include histidine 176 and glutamine 185. Cu(2+) is bound at residue tyrosine 187. A disordered region spans residues 241 to 310 (GGSPGNSAEP…STNINPTSLK (70 aa)). Over residues 245–254 (GNSAEPQPQH) the composition is skewed to polar residues. Over residues 255–304 (TSTAVSTAKTASTSSLTTSVTITSQAPSNTANPPQSITTTTTPKPQSTNI) the composition is skewed to low complexity. Asparagine 345 carries an N-linked (GlcNAc...) asparagine glycan.

Belongs to the polysaccharide monooxygenase AA9 family. Cu(2+) is required as a cofactor.

Its subcellular location is the secreted. The enzyme catalyses [(1-&gt;4)-beta-D-glucosyl]n+m + reduced acceptor + O2 = 4-dehydro-beta-D-glucosyl-[(1-&gt;4)-beta-D-glucosyl]n-1 + [(1-&gt;4)-beta-D-glucosyl]m + acceptor + H2O.. In terms of biological role, lytic polysaccharide monooxygenase (LPMO) that depolymerizes crystalline and amorphous polysaccharides via the oxidation of scissile alpha- or beta-(1-4)-glycosidic bonds, yielding C1 and C4 oxidation products. Catalysis by LPMOs requires the reduction of the active-site copper from Cu(II) to Cu(I) by a reducing agent and H(2)O(2) or O(2) as a cosubstrate. Active on cellulose and on xyloglucan for deconstruction of plant biomass. This chain is AA9 family lytic polysaccharide monooxygenase B, found in Geotrichum candidum (Oospora lactis).